The sequence spans 346 residues: MAKAYKQAGVDIEAGYQAVALMKEHVQKTMRPEVLGGIGGFGGLFDLSALGYRQPVLISGTDGVGTKLKLAFLLDRHDTIGIDCVAMCVNDIIVQGAEPLFFLDYIACGKAVPEKIAAIVKGVADGCVEAGCALIGGETAEMPGMYDEDEYDLAGFAVGVAEKERLITGETIQAGDALVGLPSSGLHSNGYSLVRRIVFEQAKLSLDEIYEPLDVPLGEELLKPTRIYAKLLRSVRERFTIKGMAHITGGGLIENIPRMLPPGIGARIQLGSWPILPIFDFLREKGSLEEEEMFSVFNMGIGLVLAVSPETAAPLVEWLSERGEPAYIIGEVAKGAGVSFAGGGRA.

The protein belongs to the AIR synthase family.

Its subcellular location is the cytoplasm. The enzyme catalyses 2-formamido-N(1)-(5-O-phospho-beta-D-ribosyl)acetamidine + ATP = 5-amino-1-(5-phospho-beta-D-ribosyl)imidazole + ADP + phosphate + H(+). It functions in the pathway purine metabolism; IMP biosynthesis via de novo pathway; 5-amino-1-(5-phospho-D-ribosyl)imidazole from N(2)-formyl-N(1)-(5-phospho-D-ribosyl)glycinamide: step 2/2. This Geobacillus kaustophilus (strain HTA426) protein is Phosphoribosylformylglycinamidine cyclo-ligase.